A 488-amino-acid chain; its full sequence is Protein nucleotidyltransferase YdiU (488 aa).

Gly-91, Gly-93, Arg-94, Lys-114, Asp-126, Gly-127, Arg-177, and Arg-184 together coordinate ATP. Asp-253 acts as the Proton acceptor in catalysis. Mg(2+) is bound by residues Asn-254 and Asp-263. Asp-263 serves as a coordination point for ATP.

Belongs to the SELO family. It depends on Mg(2+) as a cofactor. Requires Mn(2+) as cofactor.

It carries out the reaction L-seryl-[protein] + ATP = 3-O-(5'-adenylyl)-L-seryl-[protein] + diphosphate. The enzyme catalyses L-threonyl-[protein] + ATP = 3-O-(5'-adenylyl)-L-threonyl-[protein] + diphosphate. It catalyses the reaction L-tyrosyl-[protein] + ATP = O-(5'-adenylyl)-L-tyrosyl-[protein] + diphosphate. The catalysed reaction is L-histidyl-[protein] + UTP = N(tele)-(5'-uridylyl)-L-histidyl-[protein] + diphosphate. It carries out the reaction L-seryl-[protein] + UTP = O-(5'-uridylyl)-L-seryl-[protein] + diphosphate. The enzyme catalyses L-tyrosyl-[protein] + UTP = O-(5'-uridylyl)-L-tyrosyl-[protein] + diphosphate. Its function is as follows. Nucleotidyltransferase involved in the post-translational modification of proteins. It can catalyze the addition of adenosine monophosphate (AMP) or uridine monophosphate (UMP) to a protein, resulting in modifications known as AMPylation and UMPylation. This Bacillus cereus (strain AH187) protein is Protein nucleotidyltransferase YdiU.